A 278-amino-acid polypeptide reads, in one-letter code: Short-chain dehydrogenase/reductase eupG (278 aa).

NADP(+) contacts are provided by L19, D71, and N98. The active-site Proton donor is S155. NADP(+) is bound by residues Y188, K192, and T223. Y188 (proton acceptor) is an active-site residue. K192 acts as the Lowers pKa of active site Tyr in catalysis.

The protein belongs to the short-chain dehydrogenases/reductases (SDR) family.

Its pathway is secondary metabolite biosynthesis; terpenoid biosynthesis. Functionally, short-chain dehydrogenase/reductase; part of the gene cluster that mediates the biosynthesis of eupenifeldin, a bistropolone meroterpenoid that acts as an antitumor agent. The first step of eupenifeldin biosynthesis is the biosynthesis of 3-methylorcinaldehyde performed by the non-reducing polyketide synthase eupA. Oxidative dearomatization of 3-methylorcinaldehyde likely catalyzed by the FAD-dependent monooxygenase eupB is followed by oxidative ring expansion by the 2-oxoglutarate-dependent dioxygenase eupC to provide the first tropolone metabolite, tropolone stipitaldehyde. In parallel, generation of sesquiterpene alpha-humulene from farnesylpyrophosphate (FPP) is catalyzed by the terpene cyclase eupE. The cytochrome P450 monooxygenase eupD then hydroxylates humulene to humulenol. The putative Diels-Alderase eupF probably catalyzes the formation of the tropolone-humulene skeleton by linking humulenol and the polyketide moiety. The short-chain dehydrogenase/reductase eupG and the flavin-dependent monooxygenase eupH are also essential for eupenifeldin biosynthesis and are likely the additional decorating enzymes of the tropolone-humulene skeleton to produce final eupenifeldin or derivatives. The chain is Short-chain dehydrogenase/reductase eupG from Phoma sp.